We begin with the raw amino-acid sequence, 379 residues long: UDP-4-amino-4-deoxy-L-arabinose--oxoglutarate aminotransferase (379 aa).

Lys-182 carries the N6-(pyridoxal phosphate)lysine modification.

Belongs to the DegT/DnrJ/EryC1 family. ArnB subfamily. As to quaternary structure, homodimer. It depends on pyridoxal 5'-phosphate as a cofactor.

It catalyses the reaction UDP-4-amino-4-deoxy-beta-L-arabinose + 2-oxoglutarate = UDP-beta-L-threo-pentopyranos-4-ulose + L-glutamate. Its pathway is nucleotide-sugar biosynthesis; UDP-4-deoxy-4-formamido-beta-L-arabinose biosynthesis; UDP-4-deoxy-4-formamido-beta-L-arabinose from UDP-alpha-D-glucuronate: step 2/3. It functions in the pathway bacterial outer membrane biogenesis; lipopolysaccharide biosynthesis. In terms of biological role, catalyzes the conversion of UDP-4-keto-arabinose (UDP-Ara4O) to UDP-4-amino-4-deoxy-L-arabinose (UDP-L-Ara4N). The modified arabinose is attached to lipid A and is required for resistance to polymyxin and cationic antimicrobial peptides. The protein is UDP-4-amino-4-deoxy-L-arabinose--oxoglutarate aminotransferase of Salmonella heidelberg (strain SL476).